Reading from the N-terminus, the 190-residue chain is Glutathione peroxidase 2 (190 aa).

Selenocysteine 40 is an active-site residue. Position 40 (selenocysteine 40) is a non-standard amino acid, selenocysteine.

The protein belongs to the glutathione peroxidase family. In terms of assembly, homotetramer.

The protein resides in the cytoplasm. It is found in the cytosol. It carries out the reaction 2 glutathione + H2O2 = glutathione disulfide + 2 H2O. It catalyses the reaction a hydroperoxy polyunsaturated fatty acid + 2 glutathione = a hydroxy polyunsaturated fatty acid + glutathione disulfide + H2O. The enzyme catalyses tert-butyl hydroperoxide + 2 glutathione = tert-butanol + glutathione disulfide + H2O. The catalysed reaction is cumene hydroperoxide + 2 glutathione = 2-phenylpropan-2-ol + glutathione disulfide + H2O. It carries out the reaction (13S)-hydroperoxy-(9Z,11E)-octadecadienoate + 2 glutathione = (13S)-hydroxy-(9Z,11E)-octadecadienoate + glutathione disulfide + H2O. It catalyses the reaction (5S)-hydroperoxy-(6E,8Z,11Z,14Z)-eicosatetraenoate + 2 glutathione = (5S)-hydroxy-(6E,8Z,11Z,14Z)-eicosatetraenoate + glutathione disulfide + H2O. The enzyme catalyses (12R)-hydroperoxy-(5Z,8Z,10E,14Z)-eicosatetraenoate + 2 glutathione = (12R)-hydroxy-(5Z,8Z,10E,14Z)-eicosatetraenoate + glutathione disulfide + H2O. The catalysed reaction is (15S)-hydroperoxy-(5Z,8Z,11Z,13E)-eicosatetraenoate + 2 glutathione = (15S)-hydroxy-(5Z,8Z,11Z,13E)-eicosatetraenoate + glutathione disulfide + H2O. Its function is as follows. Catalyzes the reduction of hydroperoxides in a glutathione-dependent manner thus regulating cellular redox homeostasis. Can reduce small soluble hydroperoxides such as H2O2, cumene hydroperoxide and tert-butyl hydroperoxide, as well as several fatty acid-derived hydroperoxides. Cannot reduce phosphatidycholine hydroperoxide. This is Glutathione peroxidase 2 (GPX2) from Sapajus apella (Brown-capped capuchin).